The following is a 469-amino-acid chain: uncharacterized protein (469 aa).

Residues 13-81 enclose the HTH gntR-type domain; sequence TPLYEQLYTF…PKIGWFAAEV (69 aa). The H-T-H motif DNA-binding region spans 41–60; it reads KRRLSSLLDVSTATIERAYE. The residue at position 309 (K309) is an N6-(pyridoxal phosphate)lysine.

This sequence in the C-terminal section; belongs to the class-I pyridoxal-phosphate-dependent aminotransferase family. It depends on pyridoxal 5'-phosphate as a cofactor.

This is an uncharacterized protein from Bacillus subtilis (strain 168).